The primary structure comprises 190 residues: Elongation factor P (190 aa).

The protein belongs to the elongation factor P family.

It is found in the cytoplasm. It functions in the pathway protein biosynthesis; polypeptide chain elongation. In terms of biological role, involved in peptide bond synthesis. Stimulates efficient translation and peptide-bond synthesis on native or reconstituted 70S ribosomes in vitro. Probably functions indirectly by altering the affinity of the ribosome for aminoacyl-tRNA, thus increasing their reactivity as acceptors for peptidyl transferase. The protein is Elongation factor P of Pseudomonas fluorescens (strain SBW25).